The sequence spans 184 residues: GMP synthase [glutamine-hydrolyzing] subunit A (184 aa).

The Glutamine amidotransferase type-1 domain maps to 3–184 (PLYVVNNHGQ…FENFDGICSE (182 aa)). Cys75 functions as the Nucleophile in the catalytic mechanism. Residues His162 and Glu164 contribute to the active site.

In terms of assembly, heterodimer composed of a glutamine amidotransferase subunit (A) and a GMP-binding subunit (B).

The catalysed reaction is XMP + L-glutamine + ATP + H2O = GMP + L-glutamate + AMP + diphosphate + 2 H(+). It participates in purine metabolism; GMP biosynthesis; GMP from XMP (L-Gln route): step 1/1. Catalyzes the synthesis of GMP from XMP. This is GMP synthase [glutamine-hydrolyzing] subunit A from Methanoculleus marisnigri (strain ATCC 35101 / DSM 1498 / JR1).